A 477-amino-acid polypeptide reads, in one-letter code: Glutamate--tRNA ligase (477 aa).

The 'HIGH' region motif lies at 18–28 (PSPTGFIHLGN). Residues 128-138 (PRYDGSWRPEP) show a composition bias toward basic and acidic residues. Positions 128 to 151 (PRYDGSWRPEPGKTLPPVPAGMSP) are disordered. The 'KMSKS' region motif lies at 250–254 (KLSKR). Lysine 253 is a binding site for ATP.

Belongs to the class-I aminoacyl-tRNA synthetase family. Glutamate--tRNA ligase type 1 subfamily. As to quaternary structure, monomer.

It localises to the cytoplasm. It carries out the reaction tRNA(Glu) + L-glutamate + ATP = L-glutamyl-tRNA(Glu) + AMP + diphosphate. In terms of biological role, catalyzes the attachment of glutamate to tRNA(Glu) in a two-step reaction: glutamate is first activated by ATP to form Glu-AMP and then transferred to the acceptor end of tRNA(Glu). In Verminephrobacter eiseniae (strain EF01-2), this protein is Glutamate--tRNA ligase.